Here is a 308-residue protein sequence, read N- to C-terminus: MTEITAAMVKELREKSGAGMMDCKKALAETNGDMEAAIDWLRAKGIAKADKKSGRTAAEGLIGVATMGHKAVVVELNSETDFVARNDAFQDLIRGIAQVALTTDGTVDAVSAATYPATGKSVADSIKDAIATIGENMTLRRSAALEVPHGVVATYVHNAAGDGIGKLGVLVALKSEGDKAVLNSIGRQVAMHIAATNPLAIRAEEVDAAVAERERNVFIEQARESGKPEAIIEKMVDGRMRKFFEEVALLSQAFVINPDITVGAAIKEVEKEAGASIEVTGMVRLLLGEGVEKEESDFAAEVAAVAKG.

Positions 80–83 (TDFV) are involved in Mg(2+) ion dislocation from EF-Tu.

Belongs to the EF-Ts family.

The protein localises to the cytoplasm. In terms of biological role, associates with the EF-Tu.GDP complex and induces the exchange of GDP to GTP. It remains bound to the aminoacyl-tRNA.EF-Tu.GTP complex up to the GTP hydrolysis stage on the ribosome. In Agrobacterium fabrum (strain C58 / ATCC 33970) (Agrobacterium tumefaciens (strain C58)), this protein is Elongation factor Ts.